The chain runs to 492 residues: Aspartyl/glutamyl-tRNA(Asn/Gln) amidotransferase subunit B (492 aa).

Belongs to the GatB/GatE family. GatB subfamily. Heterotrimer of A, B and C subunits.

It catalyses the reaction L-glutamyl-tRNA(Gln) + L-glutamine + ATP + H2O = L-glutaminyl-tRNA(Gln) + L-glutamate + ADP + phosphate + H(+). It carries out the reaction L-aspartyl-tRNA(Asn) + L-glutamine + ATP + H2O = L-asparaginyl-tRNA(Asn) + L-glutamate + ADP + phosphate + 2 H(+). Its function is as follows. Allows the formation of correctly charged Asn-tRNA(Asn) or Gln-tRNA(Gln) through the transamidation of misacylated Asp-tRNA(Asn) or Glu-tRNA(Gln) in organisms which lack either or both of asparaginyl-tRNA or glutaminyl-tRNA synthetases. The reaction takes place in the presence of glutamine and ATP through an activated phospho-Asp-tRNA(Asn) or phospho-Glu-tRNA(Gln). This chain is Aspartyl/glutamyl-tRNA(Asn/Gln) amidotransferase subunit B, found in Dehalococcoides mccartyi (strain ATCC BAA-2266 / KCTC 15142 / 195) (Dehalococcoides ethenogenes (strain 195)).